A 331-amino-acid polypeptide reads, in one-letter code: Elongation factor Ts, mitochondrial (331 aa).

The N-terminal 14 residues, 1–14 (MIVSRQVIRSVVRK), are a transit peptide targeting the mitochondrion.

Belongs to the EF-Ts family.

Its subcellular location is the mitochondrion. Associates with the EF-Tu.GDP complex and induces the exchange of GDP to GTP. It remains bound to the aminoacyl-tRNA.EF-Tu.GTP complex up to the GTP hydrolysis stage on the ribosome. This is Elongation factor Ts, mitochondrial from Brugia malayi (Filarial nematode worm).